An 83-amino-acid polypeptide reads, in one-letter code: UPF0248 protein PYRAB10580 (83 aa).

It belongs to the UPF0248 family.

This is UPF0248 protein PYRAB10580 from Pyrococcus abyssi (strain GE5 / Orsay).